We begin with the raw amino-acid sequence, 342 residues long: Aquaporin-7 (342 aa).

Residues 1–36 (MVQASGHRRSTRGSKMVSWSVIAKIQEILQRKMVRE) lie on the Cytoplasmic side of the membrane. The residue at position 20 (Ser-20) is a Phosphoserine. Residues 37–54 (FLAEFMSTYVMMVFGLGS) form a helical membrane-spanning segment. At 55–67 (VAHMVLNKKYGSY) the chain is on the extracellular side. A helical membrane pass occupies residues 68 to 85 (LGVNLGFGFGVTMGVHVA). The Cytoplasmic portion of the chain corresponds to 86–89 (GRIS). Residues 90–103 (GAHMNAAVTFANCA) constitute an intramembrane region (discontinuously helical). An NPA 1 motif is present at residues 94 to 96 (NAA). Topologically, residues 104 to 111 (LGRVPWRK) are cytoplasmic. The chain crosses the membrane as a helical span at residues 112 to 132 (FPVYVLGQFLGSFLAAATIYS). Residues 133-170 (LFYTAILHFSGGQLMVTGPVATAGIFATYLPDHMTLWR) lie on the Extracellular side of the membrane. A helical transmembrane segment spans residues 171–188 (GFLNEAWLTGMLQLCLFA). Residues 189-200 (ITDQENNPALPG) lie on the Cytoplasmic side of the membrane. The chain crosses the membrane as a helical span at residues 201-217 (TEALVIGILVVIIGVSL). Over 218-221 (GMNT) the chain is Extracellular. The segment at residues 222 to 235 (GYAINPSRDLPPRI) is an intramembrane region (discontinuously helical). The NPA 2 signature appears at 226-228 (NPS). The Extracellular portion of the chain corresponds to 236 to 253 (FTFIAGWGKQVFSNGENW). Residues 254 to 275 (WWVPVVAPLLGAYLGGIIYLVF) traverse the membrane as a helical segment. Topologically, residues 276 to 342 (IGSTIPREPL…LHESMALEHF (67 aa)) are cytoplasmic.

It belongs to the MIP/aquaporin (TC 1.A.8) family. As to quaternary structure, homotetramer; each monomer provides an independent glycerol/water pore. Two homotetramers on opposing membranes can dimerize, forming a cell-cell junction. Interacts with PLIN1. Post-translationally, phosphorylation by PKA could prevent the interaction with PLIN1. In terms of tissue distribution, detected in the sperm head (at protein level). Detected in white adipose tissue.

The protein resides in the cell membrane. The protein localises to the cytoplasmic vesicle membrane. It is found in the lipid droplet. The enzyme catalyses glycerol(in) = glycerol(out). It carries out the reaction H2O(in) = H2O(out). It catalyses the reaction urea(in) = urea(out). Its activity is regulated as follows. Glycerol transport is regulated by pH, with the porin being permeable to glycerol at pH 7.4 but not at pH 5.5. Water permeability, however, is not influenced by pH. Inhibited by mercury ions. Functionally, aquaglyceroporins form homotetrameric transmembrane channels, with each monomer independently mediating glycerol and water transport across the plasma membrane along their osmotic gradient. Could also be permeable to urea. Mediates the efflux of glycerol, formed upon triglyceride hydrolysis, to avoid its accumulation in adipocytes and to make it available to other tissues. In the kidney, mediates the reabsorption of glycerol, preventing its loss in urine, again participating to energy homeostasis. In pancreatic beta cells, it also mediates the efflux of glycerol, regulating its intracellular levels. This Homo sapiens (Human) protein is Aquaporin-7.